A 370-amino-acid chain; its full sequence is Probable butyrate kinase (370 aa).

This sequence belongs to the acetokinase family.

Its subcellular location is the cytoplasm. It catalyses the reaction butanoate + ATP = butanoyl phosphate + ADP. The sequence is that of Probable butyrate kinase from Elusimicrobium minutum (strain Pei191).